Consider the following 101-residue polypeptide: Transcription factor ILI2 (101 aa).

Residues 1-22 are disordered; that stretch reads MSSSRRSRTSSRLAAAPPPTDE. Positions 8-63 constitute a bHLH domain; that stretch reads RTSSRLAAAPPPTDEQMAELISKLQAVLPTRGGEANAKQASSAEVLQEACRYIRRL.

The protein belongs to the bHLH protein family.

Atypical and probable non DNA-binding bHLH transcription factor that integrates multiple signaling pathways to regulate cell elongation and plant development. This chain is Transcription factor ILI2 (ILI2), found in Oryza sativa subsp. indica (Rice).